A 683-amino-acid polypeptide reads, in one-letter code: Multidrug resistance protein MdtO (683 aa).

The next 9 membrane-spanning stretches (helical) occupy residues 43–63 (VILISMTFEIPFVALSLAVLF), 75–95 (FVAILFVVATVLEIGSLFLIY), 100–120 (GEPLIRLIIAGPILMGCMFLM), 125–145 (LGLVFFAVAIVAIYGQTFPAM), 158–178 (WCIVVGLYPTLLMTLIGVLWF), 402–422 (FGGAFCGAILALLFTLLVMPW), 426–446 (IVELLFVLAPIFLLGAWIATS), 457–477 (MVVTFALATLENVFGPVYDLV), and 483–503 (ALGIIIGTVVSAVIYTFVWPE).

It belongs to the MdtO family. As to quaternary structure, could be part of a tripartite efflux system composed of MdtN, MdtO and MdtP.

The protein resides in the cell inner membrane. Its function is as follows. Could be involved in resistance to puromycin, acriflavine and tetraphenylarsonium chloride. The polypeptide is Multidrug resistance protein MdtO (mdtO) (Escherichia coli (strain K12)).